A 306-amino-acid polypeptide reads, in one-letter code: UDP-3-O-acyl-N-acetylglucosamine deacetylase (306 aa).

Positions 79, 238, and 242 each coordinate Zn(2+). Catalysis depends on histidine 265, which acts as the Proton donor.

The protein belongs to the LpxC family. It depends on Zn(2+) as a cofactor.

The enzyme catalyses a UDP-3-O-[(3R)-3-hydroxyacyl]-N-acetyl-alpha-D-glucosamine + H2O = a UDP-3-O-[(3R)-3-hydroxyacyl]-alpha-D-glucosamine + acetate. Its pathway is glycolipid biosynthesis; lipid IV(A) biosynthesis; lipid IV(A) from (3R)-3-hydroxytetradecanoyl-[acyl-carrier-protein] and UDP-N-acetyl-alpha-D-glucosamine: step 2/6. In terms of biological role, catalyzes the hydrolysis of UDP-3-O-myristoyl-N-acetylglucosamine to form UDP-3-O-myristoylglucosamine and acetate, the committed step in lipid A biosynthesis. The protein is UDP-3-O-acyl-N-acetylglucosamine deacetylase of Shewanella loihica (strain ATCC BAA-1088 / PV-4).